A 74-amino-acid chain; its full sequence is Cytochrome c oxidase subunit 2 (74 aa).

Residues 1–14 are Mitochondrial intermembrane-facing; sequence MAHPMQLGFQDAAS. A helical transmembrane segment spans residues 15–45; it reads PVMEELLHFHDHALMIVFLISTAVLYIIVVT. The Mitochondrial matrix portion of the chain corresponds to 46–74; sequence VTTKLTDKYVLDAQEIEMVWTIMPAVVLI.

This sequence belongs to the cytochrome c oxidase subunit 2 family. Component of the cytochrome c oxidase (complex IV, CIV), a multisubunit enzyme composed of 14 subunits. The complex is composed of a catalytic core of 3 subunits MT-CO1, MT-CO2 and MT-CO3, encoded in the mitochondrial DNA, and 11 supernumerary subunits COX4I, COX5A, COX5B, COX6A, COX6B, COX6C, COX7A, COX7B, COX7C, COX8 and NDUFA4, which are encoded in the nuclear genome. The complex exists as a monomer or a dimer and forms supercomplexes (SCs) in the inner mitochondrial membrane with NADH-ubiquinone oxidoreductase (complex I, CI) and ubiquinol-cytochrome c oxidoreductase (cytochrome b-c1 complex, complex III, CIII), resulting in different assemblies (supercomplex SCI(1)III(2)IV(1) and megacomplex MCI(2)III(2)IV(2)). Found in a complex with TMEM177, COA6, COX18, COX20, SCO1 and SCO2. Interacts with TMEM177 in a COX20-dependent manner. Interacts with COX20. Interacts with COX16. Cu cation serves as cofactor.

It is found in the mitochondrion inner membrane. The enzyme catalyses 4 Fe(II)-[cytochrome c] + O2 + 8 H(+)(in) = 4 Fe(III)-[cytochrome c] + 2 H2O + 4 H(+)(out). Component of the cytochrome c oxidase, the last enzyme in the mitochondrial electron transport chain which drives oxidative phosphorylation. The respiratory chain contains 3 multisubunit complexes succinate dehydrogenase (complex II, CII), ubiquinol-cytochrome c oxidoreductase (cytochrome b-c1 complex, complex III, CIII) and cytochrome c oxidase (complex IV, CIV), that cooperate to transfer electrons derived from NADH and succinate to molecular oxygen, creating an electrochemical gradient over the inner membrane that drives transmembrane transport and the ATP synthase. Cytochrome c oxidase is the component of the respiratory chain that catalyzes the reduction of oxygen to water. Electrons originating from reduced cytochrome c in the intermembrane space (IMS) are transferred via the dinuclear copper A center (CU(A)) of subunit 2 and heme A of subunit 1 to the active site in subunit 1, a binuclear center (BNC) formed by heme A3 and copper B (CU(B)). The BNC reduces molecular oxygen to 2 water molecules using 4 electrons from cytochrome c in the IMS and 4 protons from the mitochondrial matrix. In Amia calva (Bowfin), this protein is Cytochrome c oxidase subunit 2 (mt-co2).